The chain runs to 151 residues: Ribonuclease H (151 aa).

Residues 1 to 141 enclose the RNase H type-1 domain; sequence MKHVDIFTDG…ADELARRGME (141 aa). Asp-9, Glu-47, Asp-69, and Asp-133 together coordinate Mg(2+).

This sequence belongs to the RNase H family. Monomer. It depends on Mg(2+) as a cofactor.

The protein localises to the cytoplasm. The catalysed reaction is Endonucleolytic cleavage to 5'-phosphomonoester.. In terms of biological role, endonuclease that specifically degrades the RNA of RNA-DNA hybrids. This is Ribonuclease H from Rhizobium etli (strain ATCC 51251 / DSM 11541 / JCM 21823 / NBRC 15573 / CFN 42).